The chain runs to 497 residues: IWS1-like protein (497 aa).

Positions 1–191 are disordered; the sequence is MSDHEGASPA…SDRRGGRNFE (191 aa). Composition is skewed to low complexity over residues 7-23 and 47-57; these read ASPA…PVSP and PLAPRSPASPR. Composition is skewed to basic and acidic residues over residues 123–134, 144–160, and 181–191; these read EGDKQQKRKDLF, DRPK…VKGD, and PSDRRGGRNFE. Residues 281–361 form the TFIIS N-terminal domain; the sequence is SALSEWLAPL…GEWARPIYHL (81 aa). The tract at residues 369–433 is disordered; sequence SRQEREERDY…GDKGYINRAR (65 aa). Basic and acidic residues-rich tracts occupy residues 370 to 382 and 401 to 411; these read RQER…SRMP and APKRPRIRDAE.

The protein belongs to the IWS1 family.

Its subcellular location is the nucleus. The chain is IWS1-like protein from Caenorhabditis briggsae.